The chain runs to 477 residues: ATP synthase subunit beta (477 aa).

Position 148–155 (148–155 (GGAGVGKT)) interacts with ATP.

This sequence belongs to the ATPase alpha/beta chains family. In terms of assembly, F-type ATPases have 2 components, CF(1) - the catalytic core - and CF(0) - the membrane proton channel. CF(1) has five subunits: alpha(3), beta(3), gamma(1), delta(1), epsilon(1). CF(0) has three main subunits: a(1), b(2) and c(9-12). The alpha and beta chains form an alternating ring which encloses part of the gamma chain. CF(1) is attached to CF(0) by a central stalk formed by the gamma and epsilon chains, while a peripheral stalk is formed by the delta and b chains.

Its subcellular location is the cell inner membrane. It catalyses the reaction ATP + H2O + 4 H(+)(in) = ADP + phosphate + 5 H(+)(out). Its function is as follows. Produces ATP from ADP in the presence of a proton gradient across the membrane. The catalytic sites are hosted primarily by the beta subunits. The polypeptide is ATP synthase subunit beta (Psychrobacter cryohalolentis (strain ATCC BAA-1226 / DSM 17306 / VKM B-2378 / K5)).